Consider the following 329-residue polypeptide: uncharacterized protein (329 aa).

2 consecutive transmembrane segments (helical) span residues 13-35 (IPVL…WATI) and 229-248 (VIPA…SVVY).

Its subcellular location is the cell membrane. This is an uncharacterized protein from Archaeoglobus fulgidus (strain ATCC 49558 / DSM 4304 / JCM 9628 / NBRC 100126 / VC-16).